The primary structure comprises 342 residues: L-threonine 3-dehydrogenase (342 aa).

Cys-39 lines the Zn(2+) pocket. Active-site charge relay system residues include Thr-41 and His-44. Residues His-64, Glu-65, Cys-94, Cys-97, Cys-100, and Cys-108 each contribute to the Zn(2+) site. NAD(+) is bound by residues Ile-176, Asp-196, Arg-201, 263–265 (LGI), and 287–288 (IY).

Belongs to the zinc-containing alcohol dehydrogenase family. Homotetramer. It depends on Zn(2+) as a cofactor.

It localises to the cytoplasm. The enzyme catalyses L-threonine + NAD(+) = (2S)-2-amino-3-oxobutanoate + NADH + H(+). The protein operates within amino-acid degradation; L-threonine degradation via oxydo-reductase pathway; glycine from L-threonine: step 1/2. Catalyzes the NAD(+)-dependent oxidation of L-threonine to 2-amino-3-ketobutyrate. In Protochlamydia amoebophila (strain UWE25), this protein is L-threonine 3-dehydrogenase.